The chain runs to 314 residues: Malate dehydrogenase (314 aa).

Residues 11–16 (GSGNIG) and aspartate 35 each bind NAD(+). Arginine 84 and arginine 90 together coordinate substrate. NAD(+) contacts are provided by residues asparagine 97 and 120–122 (ITN). Residues asparagine 122 and arginine 153 each coordinate substrate. The Proton acceptor role is filled by histidine 177.

It belongs to the LDH/MDH superfamily. MDH type 3 family.

The catalysed reaction is (S)-malate + NAD(+) = oxaloacetate + NADH + H(+). Functionally, catalyzes the reversible oxidation of malate to oxaloacetate. In Rickettsia conorii (strain ATCC VR-613 / Malish 7), this protein is Malate dehydrogenase.